The following is a 96-amino-acid chain: MAIRPLHDRVILKRAEQESKSAGGIVLTGSAAEKSTRGEVIAVGNGRILENGEVKALDVKVGDTVIFNDGYGVKTEKLDGEEVLILSESDILAIVE.

The protein belongs to the GroES chaperonin family. As to quaternary structure, heptamer of 7 subunits arranged in a ring. Interacts with the chaperonin GroEL.

Its subcellular location is the cytoplasm. Together with the chaperonin GroEL, plays an essential role in assisting protein folding. The GroEL-GroES system forms a nano-cage that allows encapsulation of the non-native substrate proteins and provides a physical environment optimized to promote and accelerate protein folding. GroES binds to the apical surface of the GroEL ring, thereby capping the opening of the GroEL channel. The polypeptide is Co-chaperonin GroES (Alteromonas mediterranea (strain DSM 17117 / CIP 110805 / LMG 28347 / Deep ecotype)).